We begin with the raw amino-acid sequence, 144 residues long: MGLKLSGRYIFLVLAVHLAYLLQAVKATGKCDAVFKGLSDCMLTLGDKVANYPQDLEEKKNLDTICSYWDDFHVCTVTALADCQEGAADIWEKLKRQSKNLNIQGSLFELCPGSAGAPGQRLLFPAFLPLLMVFLSTLFILVLQ.

The first 27 residues, 1–27, serve as a signal peptide directing secretion; the sequence is MGLKLSGRYIFLVLAVHLAYLLQAVKA. Ser114 is lipidated: GPI-anchor amidated serine. The propeptide at 115 to 144 is removed in mature form; it reads AGAPGQRLLFPAFLPLLMVFLSTLFILVLQ.

This sequence belongs to the neuritin family. As to expression, expressed in sensory regions of the brain including the visual, auditory and olfactory systems. Within the retina, only expressed in the retinal ganglion cells. Concentrated in axon tracts including retinal axons.

Its subcellular location is the cell membrane. Modulates postsynaptic dendritic arbor elaboration and synaptic maturation. This chain is Neuritin-A (nrn1-a), found in Xenopus laevis (African clawed frog).